Reading from the N-terminus, the 83-residue chain is uncharacterized protein (83 aa).

The disordered stretch occupies residues 58–83 (EHGHDDEYDEFSDPNAWVPRRSRDTG).

This is an uncharacterized protein from Mycobacterium tuberculosis (strain CDC 1551 / Oshkosh).